The sequence spans 1186 residues: Probable inactive serine/threonine-protein kinase DDB_G0293184 (1186 aa).

The span at 1 to 12 shows a compositional bias: acidic residues; that stretch reads MEQEDQQYEEDS. Disordered stretches follow at residues 1–55 and 99–122; these read MEQE…NNDS and MEQQQQQQHLQPPLSPNSASNTNF. Composition is skewed to low complexity over residues 34 to 48 and 99 to 110; these read TTTEITTTTTTTTPT and MEQQQQQQHLQP. Positions 173 to 437 constitute a Protein kinase domain; sequence YESPPTLGKY…VHDLLRHPWL (265 aa). Residues 179-187 and Lys205 each bind ATP; that span reads LGKYDKVIL. Disordered stretches follow at residues 447–468 and 530–551; these read SSSSSSQAHPTVQSNNLNGNVN and YNNYNNNNNNNNNTNDNDNECG. Positions 453 to 468 are enriched in polar residues; the sequence is QAHPTVQSNNLNGNVN. Over residues 530 to 545 the composition is skewed to low complexity; it reads YNNYNNNNNNNNNTND. A coiled-coil region spans residues 631-659; the sequence is LKRTNQMANDLGRKYEILQSNIKRLEDYL. Polar residues predominate over residues 766-784; it reads NNLDPSNNNESVNLSTSPG. Disordered regions lie at residues 766-911 and 959-988; these read NNLD…NGNN and ENKKHQKQKSLDSTNKQSPGSLGGAGGDVS. A compositionally biased stretch (low complexity) spans 785 to 836; the sequence is SLVNSNSNPSISNSLNNNNNNNNNNNNNNNGNPNVIITTNNNCNSNSNGNNI. Positions 847-896 are enriched in basic and acidic residues; the sequence is KEVKEGKEIKEIKEPKEKDKDKEKDKDKEKDKDKEKDKDKEKEKDKDKEN. Residues 875 to 909 adopt a coiled-coil conformation; that stretch reads EKDKDKEKDKDKEKEKDKDKENNNNNNSNNNNNNG. Residues 897 to 911 are compositionally biased toward low complexity; that stretch reads NNNNNSNNNNNNGNN. The span at 969 to 978 shows a compositional bias: polar residues; sequence LDSTNKQSPG. Residues 1004 to 1186 enclose the Rho-GAP domain; sequence VRLDDLMTRE…LSFPKFNLSV (183 aa).

The protein belongs to the protein kinase superfamily. STE Ser/Thr protein kinase family.

The sequence is that of Probable inactive serine/threonine-protein kinase DDB_G0293184 from Dictyostelium discoideum (Social amoeba).